The sequence spans 60 residues: Ribosome biogenesis protein Nop10 (60 aa).

The protein belongs to the NOP10 family.

Functionally, involved in ribosome biogenesis; more specifically in 18S rRNA pseudouridylation and in cleavage of pre-rRNA. This chain is Ribosome biogenesis protein Nop10, found in Haloquadratum walsbyi (strain DSM 16790 / HBSQ001).